We begin with the raw amino-acid sequence, 143 residues long: Large ribosomal subunit protein uL11 (143 aa).

It belongs to the universal ribosomal protein uL11 family. As to quaternary structure, part of the ribosomal stalk of the 50S ribosomal subunit. Interacts with L10 and the large rRNA to form the base of the stalk. L10 forms an elongated spine to which L12 dimers bind in a sequential fashion forming a multimeric L10(L12)X complex. One or more lysine residues are methylated.

Functionally, forms part of the ribosomal stalk which helps the ribosome interact with GTP-bound translation factors. The chain is Large ribosomal subunit protein uL11 from Rhizobium johnstonii (strain DSM 114642 / LMG 32736 / 3841) (Rhizobium leguminosarum bv. viciae).